Here is a 96-residue protein sequence, read N- to C-terminus: Co-chaperonin GroES 1 (96 aa).

The protein belongs to the GroES chaperonin family. Heptamer of 7 subunits arranged in a ring. Interacts with the chaperonin GroEL.

Its subcellular location is the cytoplasm. Together with the chaperonin GroEL, plays an essential role in assisting protein folding. The GroEL-GroES system forms a nano-cage that allows encapsulation of the non-native substrate proteins and provides a physical environment optimized to promote and accelerate protein folding. GroES binds to the apical surface of the GroEL ring, thereby capping the opening of the GroEL channel. The sequence is that of Co-chaperonin GroES 1 from Vibrio vulnificus (strain CMCP6).